The chain runs to 1173 residues: Pumilio homolog 2 (1173 aa).

5 disordered regions span residues V41–G68, V265–T296, Q480–A518, L592–F662, and P730–L759. Residues T287–T296 show a composition bias toward polar residues. Positions Q480–Q492 are enriched in low complexity. Residues V493–A518 show a composition bias toward polar residues. Over residues Q606–Q622 the composition is skewed to low complexity. The segment covering P623–Y633 has biased composition (polar residues). The segment covering G634–S657 has biased composition (low complexity). The PUM-HD domain maps to G815–Y1155. Pumilio repeat units follow at residues D835 to S870, E871 to T906, R907 to R942, E943 to E978, A979 to E1014, E1015 to C1050, E1051 to D1086, E1087 to H1129, and K1130 to G1167. Positions S850–Q854 are adenine-nucleotide binding in RNA target. A uracil-nucleotide binding in RNA target region spans residues N886–Q890. Residues C922–Q926 are adenine-nucleotide binding in RNA target. Residues N958–Q962 are non-specific-nucleotide binding in RNA target. The adenine-nucleotide binding in RNA target stretch occupies residues C994 to Q998. The tract at residues N1030–Q1034 is uracil-nucleotide binding in RNA target. Residues S1066–E1070 form a guanine-nucleotide binding in RNA target region. A uracil-nucleotide binding in RNA target region spans residues N1109–Q1113.

In terms of assembly, component of a complex with papd4, sympk, tacc3, parn, dazl and cpeb1. Phosphorylated.

It is found in the cytoplasm. The protein resides in the P-body. The protein localises to the cytoplasmic granule. Its function is as follows. Sequence-specific RNA-binding protein that acts as a post-transcriptional repressor by binding the 3'-UTR of mRNA targets. Binds to an RNA consensus sequence, the Pumilio Response Element (PRE), 5'-UGUANAUA-3', that is related to the Nanos Response Element (NRE). Mediates post-transcriptional repression of transcripts via different mechanisms: acts via direct recruitment of deadenylase complexes leading to translational inhibition and mRNA degradation. Also mediates deadenylation-independent repression by promoting accessibility of miRNAs. This chain is Pumilio homolog 2 (pum2), found in Xenopus laevis (African clawed frog).